Reading from the N-terminus, the 213-residue chain is MSRNSYIQQNSDIQAAGGLVPMVIEQSARGERAYDIYSRLLKERVIFMVGPVEDYMANLIAAQLLFLEAENPDKDIHLYINSPGGSVTAGMSIYDTMQFIKPDVSTICIGQACSMGAFLLAGGAEGKRHCLPNSRMMIHQPLGGFQGQASDIDIHAKEILHIRHRLNSLLAHHTGQSLETIERDTERDNFMSAERAAEYGLIDSVINKRQMPA.

Serine 114 functions as the Nucleophile in the catalytic mechanism. The active site involves histidine 139.

This sequence belongs to the peptidase S14 family. Fourteen ClpP subunits assemble into 2 heptameric rings which stack back to back to give a disk-like structure with a central cavity, resembling the structure of eukaryotic proteasomes.

The protein resides in the cytoplasm. The catalysed reaction is Hydrolysis of proteins to small peptides in the presence of ATP and magnesium. alpha-casein is the usual test substrate. In the absence of ATP, only oligopeptides shorter than five residues are hydrolyzed (such as succinyl-Leu-Tyr-|-NHMec, and Leu-Tyr-Leu-|-Tyr-Trp, in which cleavage of the -Tyr-|-Leu- and -Tyr-|-Trp bonds also occurs).. In terms of biological role, cleaves peptides in various proteins in a process that requires ATP hydrolysis. Has a chymotrypsin-like activity. Plays a major role in the degradation of misfolded proteins. This is ATP-dependent Clp protease proteolytic subunit from Pseudomonas syringae pv. syringae (strain B728a).